The primary structure comprises 618 residues: Leucine aminopeptidase 2 (618 aa).

Residues 139–141 and 271–276 each bind a peptide; these read QCQ and PYGGME. His300 is a binding site for Zn(2+). Glu301 functions as the Proton acceptor in the catalytic mechanism. Zn(2+) contacts are provided by His304 and Glu323. Catalysis depends on Tyr388, which acts as the Proton donor.

Belongs to the peptidase M1 family. The cofactor is Zn(2+).

It is found in the cytoplasm. Its subcellular location is the nucleus. The enzyme catalyses an epoxide + H2O = an ethanediol. In terms of biological role, aminopeptidase that preferentially cleaves di- and tripeptides. Also has low epoxide hydrolase activity (in vitro). Can hydrolyze the epoxide leukotriene LTA(4) but it forms preferentially 5,6-dihydroxy-7,9,11,14-eicosatetraenoic acid rather than the cytokine leukotriene B(4) as the product compared to the homologous mammalian enzyme (in vitro). This chain is Leucine aminopeptidase 2, found in Aspergillus niger (strain ATCC MYA-4892 / CBS 513.88 / FGSC A1513).